A 375-amino-acid chain; its full sequence is Tyrosine--tRNA ligase (375 aa).

Tyr37, Tyr168, Gln172, Asp175, and Gln190 together coordinate L-tyrosine. The 'KMSKS' region motif lies at 251-255 (KMSKS). Position 254 (Lys254) interacts with ATP.

It belongs to the class-I aminoacyl-tRNA synthetase family. TyrS type 4 subfamily. As to quaternary structure, homodimer.

It is found in the cytoplasm. It catalyses the reaction tRNA(Tyr) + L-tyrosine + ATP = L-tyrosyl-tRNA(Tyr) + AMP + diphosphate + H(+). Its function is as follows. Catalyzes the attachment of tyrosine to tRNA(Tyr) in a two-step reaction: tyrosine is first activated by ATP to form Tyr-AMP and then transferred to the acceptor end of tRNA(Tyr). The chain is Tyrosine--tRNA ligase from Thermococcus sibiricus (strain DSM 12597 / MM 739).